Consider the following 213-residue polypeptide: Anti-sigma-W factor RsiW (213 aa).

Topologically, residues 1–86 (MSCEQHYRTL…TNRFKVWMRR (86 aa)) are cytoplasmic. 3 residues coordinate Zn(2+): H30, C34, and C37. Residues 87 to 109 (YPLAVAAAVFVLLMSTSLFSMWS) form a helical membrane-spanning segment. The Extracellular segment spans residues 110–213 (SDGEHVTVTG…ISDEKNSPSS (104 aa)).

This sequence belongs to the zinc-associated anti-sigma factor (ZAS) superfamily. Anti-sigma-W factor family. Zn(2+) serves as cofactor. In terms of processing, is processed by three successive proteolytic events. First, the extracellular region of RsiW is cleaved by PrsW (Site-1 cleavage) in response to cell envelope stresses. Next, it undergoes cleavage at an intramembrane site (Site-2 cleavage) mediated by RasP. This cleavage uncovers a cryptic proteolytic tag with conserved alanine residues in the transmembrane segment, that is recognized mainly by the ClpXP protease, which completely degrades the protein in the cytoplasm and leads to the induction of the sigma-W-controlled genes.

Its subcellular location is the membrane. Is the anti-sigma factor for SigW. The presence of RsiW leads to the inactivation of SigW, and its proteolytic destruction to sigma-W activation. This Halalkalibacterium halodurans (strain ATCC BAA-125 / DSM 18197 / FERM 7344 / JCM 9153 / C-125) (Bacillus halodurans) protein is Anti-sigma-W factor RsiW (rsiW).